We begin with the raw amino-acid sequence, 427 residues long: Proline--tRNA ligase (427 aa).

The protein belongs to the class-II aminoacyl-tRNA synthetase family. ProS type 2 subfamily. As to quaternary structure, homodimer.

The protein resides in the cytoplasm. It carries out the reaction tRNA(Pro) + L-proline + ATP = L-prolyl-tRNA(Pro) + AMP + diphosphate. Its function is as follows. Catalyzes the attachment of proline to tRNA(Pro) in a two-step reaction: proline is first activated by ATP to form Pro-AMP and then transferred to the acceptor end of tRNA(Pro). This Rickettsia akari (strain Hartford) protein is Proline--tRNA ligase.